The following is a 162-amino-acid chain: Interleukin-15 (162 aa).

Positions 1-29 (MRISKPHLRITSIQCYVCLLLNTHFLTEA) are cleaved as a signal peptide. A propeptide spanning residues 30–48 (GIRVFILGCISAGIPKTEA) is cleaved from the precursor. 2 disulfide bridges follow: cysteine 83-cysteine 133 and cysteine 90-cysteine 136. N-linked (GlcNAc...) asparagine glycans are attached at residues asparagine 119, asparagine 127, and asparagine 143.

It belongs to the IL-15/IL-21 family.

It is found in the secreted. Functionally, cytokine that plays a major role in the development of inflammatory and protective immune responses to microbial invaders and parasites by modulating immune cells of both the innate and adaptive immune systems. Stimulates the proliferation of natural killer cells, T-cells and B-cells and promotes the secretion of several cytokines. In monocytes, induces the production of IL8 and monocyte chemotactic protein 1/CCL2, two chemokines that attract neutrophils and monocytes respectively to sites of infection. Unlike most cytokines, which are secreted in soluble form, IL15 is expressed in association with its high affinity IL15RA on the surface of IL15-producing cells and delivers signals to target cells that express IL2RB and IL2RG receptor subunits. Binding to its receptor triggers the phosphorylation of JAK1 and JAK3 and the recruitment and subsequent phosphorylation of signal transducer and activator of transcription-3/STAT3 and STAT5. In mast cells, induces the rapid tyrosine phosphorylation of STAT6 and thereby controls mast cell survival and release of cytokines such as IL4. This Marmota himalayana (Himalayan marmot) protein is Interleukin-15 (IL15).